A 432-amino-acid chain; its full sequence is D-amino acid dehydrogenase (432 aa).

3–17 (VLVLGGGVIGVTSAY) provides a ligand contact to FAD.

Belongs to the DadA oxidoreductase family. FAD is required as a cofactor.

The enzyme catalyses a D-alpha-amino acid + A + H2O = a 2-oxocarboxylate + AH2 + NH4(+). Its pathway is amino-acid degradation; D-alanine degradation; NH(3) and pyruvate from D-alanine: step 1/1. Its function is as follows. Oxidative deamination of D-amino acids. The polypeptide is D-amino acid dehydrogenase (Delftia acidovorans (strain DSM 14801 / SPH-1)).